The primary structure comprises 262 residues: Ribosomal RNA small subunit methyltransferase A (262 aa).

6 residues coordinate S-adenosyl-L-methionine: His16, Leu18, Gly43, Glu64, Asp89, and Asn109.

Belongs to the class I-like SAM-binding methyltransferase superfamily. rRNA adenine N(6)-methyltransferase family. RsmA subfamily.

The protein localises to the cytoplasm. The enzyme catalyses adenosine(1518)/adenosine(1519) in 16S rRNA + 4 S-adenosyl-L-methionine = N(6)-dimethyladenosine(1518)/N(6)-dimethyladenosine(1519) in 16S rRNA + 4 S-adenosyl-L-homocysteine + 4 H(+). Specifically dimethylates two adjacent adenosines (A1518 and A1519) in the loop of a conserved hairpin near the 3'-end of 16S rRNA in the 30S particle. May play a critical role in biogenesis of 30S subunits. The polypeptide is Ribosomal RNA small subunit methyltransferase A (Xanthomonas campestris pv. campestris (strain B100)).